The chain runs to 104 residues: Pyrimidine/purine nucleoside phosphorylase (104 aa).

Belongs to the nucleoside phosphorylase PpnP family.

The enzyme catalyses a purine D-ribonucleoside + phosphate = a purine nucleobase + alpha-D-ribose 1-phosphate. The catalysed reaction is adenosine + phosphate = alpha-D-ribose 1-phosphate + adenine. It catalyses the reaction cytidine + phosphate = cytosine + alpha-D-ribose 1-phosphate. It carries out the reaction guanosine + phosphate = alpha-D-ribose 1-phosphate + guanine. The enzyme catalyses inosine + phosphate = alpha-D-ribose 1-phosphate + hypoxanthine. The catalysed reaction is thymidine + phosphate = 2-deoxy-alpha-D-ribose 1-phosphate + thymine. It catalyses the reaction uridine + phosphate = alpha-D-ribose 1-phosphate + uracil. It carries out the reaction xanthosine + phosphate = alpha-D-ribose 1-phosphate + xanthine. Functionally, catalyzes the phosphorolysis of diverse nucleosides, yielding D-ribose 1-phosphate and the respective free bases. Can use uridine, adenosine, guanosine, cytidine, thymidine, inosine and xanthosine as substrates. Also catalyzes the reverse reactions. The polypeptide is Pyrimidine/purine nucleoside phosphorylase (Janthinobacterium sp. (strain Marseille) (Minibacterium massiliensis)).